Consider the following 119-residue polypeptide: Large ribosomal subunit protein uL18 (119 aa).

Belongs to the universal ribosomal protein uL18 family. Part of the 50S ribosomal subunit; part of the 5S rRNA/L5/L18/L25 subcomplex. Contacts the 5S and 23S rRNAs.

In terms of biological role, this is one of the proteins that bind and probably mediate the attachment of the 5S RNA into the large ribosomal subunit, where it forms part of the central protuberance. This chain is Large ribosomal subunit protein uL18, found in Anaeromyxobacter sp. (strain Fw109-5).